We begin with the raw amino-acid sequence, 549 residues long: Glucose-6-phosphate isomerase (549 aa).

E355 functions as the Proton donor in the catalytic mechanism. Residues H387 and K515 contribute to the active site.

Belongs to the GPI family.

The protein localises to the cytoplasm. It catalyses the reaction alpha-D-glucose 6-phosphate = beta-D-fructose 6-phosphate. It functions in the pathway carbohydrate biosynthesis; gluconeogenesis. The protein operates within carbohydrate degradation; glycolysis; D-glyceraldehyde 3-phosphate and glycerone phosphate from D-glucose: step 2/4. In terms of biological role, catalyzes the reversible isomerization of glucose-6-phosphate to fructose-6-phosphate. In Haemophilus influenzae (strain 86-028NP), this protein is Glucose-6-phosphate isomerase.